The primary structure comprises 378 residues: Deoxyguanosinetriphosphate triphosphohydrolase-like protein (378 aa).

A disordered region spans residues 1 to 28 (MLAPYACQPGESRGRQQPESMSTFRSPF). Polar residues predominate over residues 15 to 26 (RQQPESMSTFRS). The HD domain occupies 62–198 (RLTHSIEVAQ…AAIADDVAYS (137 aa)).

Belongs to the dGTPase family. Type 2 subfamily.

The sequence is that of Deoxyguanosinetriphosphate triphosphohydrolase-like protein from Cereibacter sphaeroides (strain ATCC 17025 / ATH 2.4.3) (Rhodobacter sphaeroides).